Consider the following 300-residue polypeptide: RNA polymerase sigma factor RpoH (300 aa).

The interval 53–122 (LVTSHLRLVA…IQEYILRSWS (70 aa)) is sigma-70 factor domain-2. The Interaction with polymerase core subunit RpoC signature appears at 77–80 (EVVS). The tract at residues 231-282 (AMGVLNDRERRIFEARRLAEDPVTLEELSSEFDISRERVRQIEVRAFEKVQE) is sigma-70 factor domain-4. A DNA-binding region (H-T-H motif) is located at residues 255–274 (LEELSSEFDISRERVRQIEV).

Belongs to the sigma-70 factor family. RpoH subfamily. As to quaternary structure, interacts with the RNA polymerase core enzyme.

It is found in the cytoplasm. Its function is as follows. Sigma factors are initiation factors that promote the attachment of RNA polymerase to specific initiation sites and are then released. This sigma factor is involved in regulation of expression of heat shock genes. The chain is RNA polymerase sigma factor RpoH from Rhizobium radiobacter (Agrobacterium tumefaciens).